A 98-amino-acid polypeptide reads, in one-letter code: NADH-ubiquinone oxidoreductase chain 4L (98 aa).

3 helical membrane passes run 1–21, 26–46, and 59–79; these read MTHI…GLTF, LLSA…ALAM, and APLL…SLLV.

Belongs to the complex I subunit 4L family.

The protein localises to the mitochondrion membrane. The enzyme catalyses a ubiquinone + NADH + 5 H(+)(in) = a ubiquinol + NAD(+) + 4 H(+)(out). Core subunit of the mitochondrial membrane respiratory chain NADH dehydrogenase (Complex I) which catalyzes electron transfer from NADH through the respiratory chain, using ubiquinone as an electron acceptor. Part of the enzyme membrane arm which is embedded in the lipid bilayer and involved in proton translocation. The protein is NADH-ubiquinone oxidoreductase chain 4L (MT-ND4L) of Polypterus ornatipinnis (Ornate bichir).